Here is a 120-residue protein sequence, read N- to C-terminus: Large ribosomal subunit protein uL22 (120 aa).

It belongs to the universal ribosomal protein uL22 family. Part of the 50S ribosomal subunit.

In terms of biological role, this protein binds specifically to 23S rRNA; its binding is stimulated by other ribosomal proteins, e.g. L4, L17, and L20. It is important during the early stages of 50S assembly. It makes multiple contacts with different domains of the 23S rRNA in the assembled 50S subunit and ribosome. Its function is as follows. The globular domain of the protein is located near the polypeptide exit tunnel on the outside of the subunit, while an extended beta-hairpin is found that lines the wall of the exit tunnel in the center of the 70S ribosome. The sequence is that of Large ribosomal subunit protein uL22 from Acaryochloris marina (strain MBIC 11017).